A 513-amino-acid polypeptide reads, in one-letter code: Light-independent protochlorophyllide reductase subunit B (513 aa).

Asp-36 contacts [4Fe-4S] cluster. Residue Asp-274 is the Proton donor of the active site. 409 to 410 (GL) serves as a coordination point for substrate. A disordered region spans residues 426 to 457 (DAAGPSHHGGHSPKPQAAEPAPQAAPQPENTG). Residues 440 to 454 (PQAAEPAPQAAPQPE) are compositionally biased toward low complexity.

The protein belongs to the ChlB/BchB/BchZ family. In terms of assembly, protochlorophyllide reductase is composed of three subunits; BchL, BchN and BchB. Forms a heterotetramer of two BchB and two BchN subunits. [4Fe-4S] cluster serves as cofactor.

The enzyme catalyses chlorophyllide a + oxidized 2[4Fe-4S]-[ferredoxin] + 2 ADP + 2 phosphate = protochlorophyllide a + reduced 2[4Fe-4S]-[ferredoxin] + 2 ATP + 2 H2O. It participates in porphyrin-containing compound metabolism; bacteriochlorophyll biosynthesis (light-independent). Functionally, component of the dark-operative protochlorophyllide reductase (DPOR) that uses Mg-ATP and reduced ferredoxin to reduce ring D of protochlorophyllide (Pchlide) to form chlorophyllide a (Chlide). This reaction is light-independent. The NB-protein (BchN-BchB) is the catalytic component of the complex. In Roseobacter denitrificans (strain ATCC 33942 / OCh 114) (Erythrobacter sp. (strain OCh 114)), this protein is Light-independent protochlorophyllide reductase subunit B.